An 82-amino-acid polypeptide reads, in one-letter code: Toxin TdNa6 (82 aa).

An N-terminal signal peptide occupies residues 1-20 (MKGMIMLISCLMLIEVVVGG). The 62-residue stretch at 21–82 (KEGYLLDRSN…KMWHLKTNKC (62 aa)) folds into the LCN-type CS-alpha/beta domain. Cystine bridges form between cysteine 32–cysteine 82, cysteine 36–cysteine 58, cysteine 44–cysteine 63, and cysteine 48–cysteine 65.

This sequence belongs to the long (4 C-C) scorpion toxin superfamily. Sodium channel inhibitor family. Beta subfamily. Expressed by the venom gland.

It localises to the secreted. Beta toxins bind voltage-independently at site-4 of sodium channels (Nav) and shift the voltage of activation toward more negative potentials thereby affecting sodium channel activation and promoting spontaneous and repetitive firing. Is toxic to arthropods. This Tityus discrepans (Venezuelan scorpion) protein is Toxin TdNa6.